A 535-amino-acid chain; its full sequence is Cytochrome P450 4c3 (535 aa).

Heme contacts are provided by E342 and C481.

It belongs to the cytochrome P450 family. Heme is required as a cofactor.

Its subcellular location is the endoplasmic reticulum membrane. It is found in the microsome membrane. Functionally, may be involved in the metabolism of insect hormones and in the breakdown of synthetic insecticides. The protein is Cytochrome P450 4c3 (Cyp4c3) of Drosophila melanogaster (Fruit fly).